A 488-amino-acid polypeptide reads, in one-letter code: MSSRKVHFVSLGCPKNRVDSEVMLGVARAAGFAHVDDAAEAEVIVVNTCGFIGEAKKESIDAIFEMAQHKEHGSCKRLVVAGCLSQRHPEELAREMPEVDHFLGSSDMLKLGRVLAGDAERMLVGNPAEWLIQAGDPRTLSTPGGSAYVKIAEGCNRTCSFCVIPDLRGAQRSRPIPDVVREVEQLAAAGVREINLISQDTIAYGRDAAGRSEGGARATLAQLVERVADVPGVRWVRLFYLYPETMTDDLVELLAGHPRVVPYVDMPLQHAADAMLRRMRRGHGGDRLRRVVSTLRERVPDLTFRTAFIVGHPGETDAEFEELCDFVRWAEFERVGVFRYSDEEASRSYELEGKVPARTAASRYRRLMTLQRRISHKKSAAMIGRELEVLVEGTSDEHEYVLMGRHAGQAPEIDGQVYLSGGEVRPGEMCRVRITQASDYDLVGELLDDEESGRGAGLPPAADLGAVTAKRRVALRVLQTDGRERQQN.

The region spanning 4–120 (RKVHFVSLGC…LGRVLAGDAE (117 aa)) is the MTTase N-terminal domain. The [4Fe-4S] cluster site is built by Cys-13, Cys-49, Cys-83, Cys-155, Cys-159, and Cys-162. Positions 141 to 377 (STPGGSAYVK…MTLQRRISHK (237 aa)) constitute a Radical SAM core domain. The 69-residue stretch at 380–448 (AAMIGRELEV…DYDLVGELLD (69 aa)) folds into the TRAM domain.

It belongs to the methylthiotransferase family. RimO subfamily. The cofactor is [4Fe-4S] cluster.

It is found in the cytoplasm. The catalysed reaction is L-aspartate(89)-[ribosomal protein uS12]-hydrogen + (sulfur carrier)-SH + AH2 + 2 S-adenosyl-L-methionine = 3-methylsulfanyl-L-aspartate(89)-[ribosomal protein uS12]-hydrogen + (sulfur carrier)-H + 5'-deoxyadenosine + L-methionine + A + S-adenosyl-L-homocysteine + 2 H(+). Its function is as follows. Catalyzes the methylthiolation of an aspartic acid residue of ribosomal protein uS12. In Sorangium cellulosum (strain So ce56) (Polyangium cellulosum (strain So ce56)), this protein is Ribosomal protein uS12 methylthiotransferase RimO.